The sequence spans 650 residues: Chaperone protein HtpG (650 aa).

Residues 1-349 (MTKTTKKFET…SSDLPLNVSR (349 aa)) form an a; substrate-binding region. Residues 350–566 (EILQEDVQIK…EHGLNANMER (217 aa)) are b. The c stretch occupies residues 567 to 650 (ILRAMNQDVP…VADGKAAAGE (84 aa)).

It belongs to the heat shock protein 90 family. Homodimer.

The protein resides in the cytoplasm. Its function is as follows. Molecular chaperone. Has ATPase activity. This is Chaperone protein HtpG from Geobacter metallireducens (strain ATCC 53774 / DSM 7210 / GS-15).